Here is a 2036-residue protein sequence, read N- to C-terminus: Ral GTPase-activating protein subunit alpha-1 (2036 aa).

Disordered regions lie at residues Leu343–Cys384 and Glu476–Ser497. Basic and acidic residues predominate over residues Ser345–Gln365. Polar residues-rich tracts occupy residues Ser366–Cys384 and Gly486–Ser497. Residues Ser711 and Ser721 each carry the phosphoserine modification. The tract at residues Ser715 to Lys753 is disordered. Position 754 is a phosphothreonine (Thr754). A Phosphoserine modification is found at Ser773. The residue at position 778 (Thr778) is a Phosphothreonine. Phosphoserine occurs at positions 797, 860, 861, and 864. Disordered stretches follow at residues Ser849–His910 and Thr982–Asn1009. Residues Gly850–Gly863 are compositionally biased toward polar residues. Positions Ser895 to His910 are enriched in low complexity. Residues Ile983–Asn1009 are compositionally biased toward polar residues. 4 positions are modified to phosphoserine: Ser986, Ser990, Ser994, and Ser1000. At Thr1002 the chain carries Phosphothreonine. Phosphoserine occurs at positions 1004 and 1478. A minimal domain that binds to TCF3/E12 region spans residues Phe1327–Asp2035. A coiled-coil region spans residues Lys1716–Asn1744. The region spanning Leu1796 to Ile2004 is the Rap-GAP domain.

As to quaternary structure, component of the heterodimeric RalGAP1 complex with RALGAPB. Heterodimerization is required for activity. Interacts with the HLH region of TCF3/isoform E12. In terms of tissue distribution, widely expressed.

It localises to the cytoplasm. Its subcellular location is the nucleus. Its function is as follows. Catalytic subunit of the heterodimeric RalGAP1 complex which acts as a GTPase activator for the Ras-like small GTPases RALA and RALB. The sequence is that of Ral GTPase-activating protein subunit alpha-1 (RALGAPA1) from Homo sapiens (Human).